We begin with the raw amino-acid sequence, 50 residues long: MADNTDLSFTGLTDEQAQELHSVYMSGLFLFAAVAVVAHLATYIWRPWFG.

Topologically, residues 2-22 (ADNTDLSFTGLTDEQAQELHS) are cytoplasmic. 2 residues coordinate a bacteriochlorophyll: His21 and His39. Residues 23-45 (VYMSGLFLFAAVAVVAHLATYIW) traverse the membrane as a helical segment. Residues 46–50 (RPWFG) are Periplasmic-facing.

The protein belongs to the antenna complex beta subunit family. In terms of assembly, the core complex is formed by different alpha and beta chains, binding bacteriochlorophyll molecules, and arranged most probably in tetrameric structures disposed around the reaction center. The non-pigmented gamma chains may constitute additional components.

It is found in the cell inner membrane. Antenna complexes are light-harvesting systems, which transfer the excitation energy to the reaction centers. The sequence is that of Light-harvesting protein B-870 beta chain (pufB) from Roseobacter denitrificans (strain ATCC 33942 / OCh 114) (Erythrobacter sp. (strain OCh 114)).